A 178-amino-acid chain; its full sequence is ATP synthase subunit b (178 aa).

A helical transmembrane segment spans residues 30-50 (FFFVLAIFLIVLAVIGTFVVP).

The protein belongs to the ATPase B chain family. As to quaternary structure, F-type ATPases have 2 components, F(1) - the catalytic core - and F(0) - the membrane proton channel. F(1) has five subunits: alpha(3), beta(3), gamma(1), delta(1), epsilon(1). F(0) has three main subunits: a(1), b(2) and c(10-14). The alpha and beta chains form an alternating ring which encloses part of the gamma chain. F(1) is attached to F(0) by a central stalk formed by the gamma and epsilon chains, while a peripheral stalk is formed by the delta and b chains.

It localises to the cell membrane. In terms of biological role, f(1)F(0) ATP synthase produces ATP from ADP in the presence of a proton or sodium gradient. F-type ATPases consist of two structural domains, F(1) containing the extramembraneous catalytic core and F(0) containing the membrane proton channel, linked together by a central stalk and a peripheral stalk. During catalysis, ATP synthesis in the catalytic domain of F(1) is coupled via a rotary mechanism of the central stalk subunits to proton translocation. Its function is as follows. Component of the F(0) channel, it forms part of the peripheral stalk, linking F(1) to F(0). The chain is ATP synthase subunit b from Mycobacterium avium (strain 104).